Reading from the N-terminus, the 860-residue chain is DNA primase (860 aa).

A CHC2-type zinc finger spans residues 804–842 (CLNRQHRGNRDNVLVYIQLKADGNRLILILWSTCFATKC).

This sequence belongs to the herpesviridae DNA primase family. As to quaternary structure, associates with the helicase and the primase-associated factor to form the helicase-primase factor.

It localises to the host nucleus. In terms of biological role, essential component of the helicase/primase complex. Unwinds the DNA at the replication forks and generates single-stranded DNA for both leading and lagging strand synthesis. The primase initiates primer synthesis and thereby produces large amount of short RNA primers on the lagging strand that the polymerase elongates using dNTPs. This chain is DNA primase (U43), found in Homo sapiens (Human).